Reading from the N-terminus, the 84-residue chain is Large ribosomal subunit protein bL27 (84 aa).

The tract at residues 1 to 21 (MAHKKAGGSTRNGRDSESKRL) is disordered.

Belongs to the bacterial ribosomal protein bL27 family.

In Baumannia cicadellinicola subsp. Homalodisca coagulata, this protein is Large ribosomal subunit protein bL27.